A 94-amino-acid chain; its full sequence is MKQKLMVGAFIAAVSLSAAAVDMSNVVKTYDLQDGSKVHVFKDGKMGMENKFGKSMNMPEGKVMETRDGTKIIMKGNEIFRLDEALRKGHSEGG.

The N-terminal stretch at 1 to 20 (MKQKLMVGAFIAAVSLSAAA) is a signal peptide.

As to quaternary structure, monomer in the copper-bound form. Homodimer as apoprotein. Dissociates into monomers upon copper binding.

Its subcellular location is the periplasm. Functionally, involved in resistance to copper. Can bind up to 2 copper ions. Has higher affinity for Cu(+) than for Cu(2+). The polypeptide is Copper resistance protein K (copK) (Cupriavidus metallidurans (strain ATCC 43123 / DSM 2839 / NBRC 102507 / CH34) (Ralstonia metallidurans)).